The sequence spans 73 residues: Alpha-bungarotoxin N3 (73 aa).

5 cysteine pairs are disulfide-bonded: Cys3–Cys23, Cys16–Cys43, Cys28–Cys32, Cys47–Cys58, and Cys59–Cys64.

It belongs to the three-finger toxin family. Long-chain subfamily. Type II alpha-neurotoxin sub-subfamily. As to quaternary structure, monomer in solution, homodimer in crystal state. As to expression, expressed by the venom gland.

Its subcellular location is the secreted. Binds with high affinity to muscular (alpha-1/CHRNA1) and neuronal (alpha-7/CHRNA7) nicotinic acetylcholine receptor (nAChR) and inhibits acetylcholine from binding to the receptor, thereby impairing neuromuscular and neuronal transmission. Mice injected with this toxin develop flaccid paralysis followed by death. Irreversibly inhibits twitches in a concentration-dependent manner in rat phrenic nerve-hemidiaphragm and chick biventer cervicis muscle. The protein is Alpha-bungarotoxin N3 of Bungarus candidus (Malayan krait).